A 159-amino-acid polypeptide reads, in one-letter code: MRIGHGFDVHAFGGTGPIILGGVRIPYEQGLLAHSDGDVALHALTDALLGAAALGDIGKLFPDTDPAFKGADSRELLREAWRRIQAKGYTLGNVDVTIIAQAPKMAPHIPQMRVFIAEDLGCHMDQVNVKATTTEKLGFTGRGEGIACEAVALLMKAGA.

2 residues coordinate a divalent metal cation: aspartate 8 and histidine 10. 4-CDP-2-C-methyl-D-erythritol 2-phosphate-binding positions include 8 to 10 (DVH) and 34 to 35 (HS). Histidine 42 contributes to the a divalent metal cation binding site. 4-CDP-2-C-methyl-D-erythritol 2-phosphate-binding positions include 56-58 (DIG), 61-65 (FPDTD), 100-106 (AQAPKMA), 132-135 (TTTE), phenylalanine 139, and arginine 142.

Belongs to the IspF family. As to quaternary structure, homotrimer. A divalent metal cation is required as a cofactor.

The enzyme catalyses 4-CDP-2-C-methyl-D-erythritol 2-phosphate = 2-C-methyl-D-erythritol 2,4-cyclic diphosphate + CMP. It participates in isoprenoid biosynthesis; isopentenyl diphosphate biosynthesis via DXP pathway; isopentenyl diphosphate from 1-deoxy-D-xylulose 5-phosphate: step 4/6. Functionally, involved in the biosynthesis of isopentenyl diphosphate (IPP) and dimethylallyl diphosphate (DMAPP), two major building blocks of isoprenoid compounds. Catalyzes the conversion of 4-diphosphocytidyl-2-C-methyl-D-erythritol 2-phosphate (CDP-ME2P) to 2-C-methyl-D-erythritol 2,4-cyclodiphosphate (ME-CPP) with a corresponding release of cytidine 5-monophosphate (CMP). The chain is 2-C-methyl-D-erythritol 2,4-cyclodiphosphate synthase from Cronobacter sakazakii (strain ATCC BAA-894) (Enterobacter sakazakii).